The chain runs to 380 residues: GATOR1 complex protein NPRL2 (380 aa).

The segment at 1–133 (MGSSCRIECI…SKQKLVPIMT (133 aa)) is interaction with PDPK1. Position 78 (Arg78) interacts with GDP. The residue at position 78 (Arg78) is an Asymmetric dimethylarginine. Glycyl lysine isopeptide (Lys-Gly) (interchain with G-Cter in ubiquitin) cross-links involve residues Lys158 and Lys357.

Belongs to the NPR2 family. Within the GATOR complex, component of the GATOR1 subcomplex, made of DEPDC5, NPRL2 and NPRL3. GATOR1 mediates the strong interaction of the GATOR complex with small GTPases Rag (RagA/RRAGA, RagB/RRAGB, RagC/RRAGC and/or RagD/RRAGD) heterodimers. GATOR1 interacts with GPR155/LYCHOS; interaction takes place in presence of cholesterol and prevents interaction between GATOR1 and KICSTOR. Interacts with PDPK1. In terms of processing, in the presence of abundant amino acids, ubiquitinated at Lys-158 and Lys-357 via 'Lys-6'-linked ubiquitination by the WDR24 component of the GATOR2 complex, thereby inhibiting the GATOR1 complex and promoting mTORC1 activation. Asymmetric dimethylation at Arg-78 by PRMT1 inhibits the GTPase activator activity of the GATOR1 complex and consequently inducing timely mTORC1 activation under methionine-sufficient conditions.

It localises to the lysosome membrane. Catalytic component of the GATOR1 complex, a multiprotein complex that functions as an inhibitor of the amino acid-sensing branch of the mTORC1 pathway. In response to amino acid depletion, the GATOR1 complex has GTPase activating protein (GAP) activity and strongly increases GTP hydrolysis by RagA/RRAGA (or RagB/RRAGB) within heterodimeric Rag complexes, thereby turning them into their inactive GDP-bound form, releasing mTORC1 from lysosomal surface and inhibiting mTORC1 signaling. In the presence of abundant amino acids, the GATOR1 complex is ubiquitinated and inhibited by GATOR2. Within the GATOR1 complex, NPRL2 constitutes the catalytic subunit that mediates the GTPase activator activity and under methionine-sufficient conditions, the GTPase activator activity is inhibited by PRMT1 through methylation and consequently inducing timely mTORC1 activation. Its function is as follows. Suppresses Src-dependent tyrosine phosphorylation and activation of PDPK1 and its downstream signaling. Down-regulates PDPK1 kinase activity by interfering with tyrosine phosphorylation at 'Tyr-9', 'Tyr-373' and 'Tyr-376' residues. May act as a tumor suppressor. Suppresses cell growth and enhances sensitivity to various anticancer drugs. This Mus musculus (Mouse) protein is GATOR1 complex protein NPRL2.